Here is a 117-residue protein sequence, read N- to C-terminus: Large ribosomal subunit protein bL20 (117 aa).

The protein belongs to the bacterial ribosomal protein bL20 family.

Functionally, binds directly to 23S ribosomal RNA and is necessary for the in vitro assembly process of the 50S ribosomal subunit. It is not involved in the protein synthesizing functions of that subunit. The protein is Large ribosomal subunit protein bL20 of Photobacterium profundum (strain SS9).